We begin with the raw amino-acid sequence, 97 residues long: Large ribosomal subunit protein eL21 (97 aa).

Residues 1–26 (MQKSEGFRSKTRYKLQKHPRQKGMAP) are disordered. The span at 9 to 21 (SKTRYKLQKHPRQ) shows a compositional bias: basic residues.

Belongs to the eukaryotic ribosomal protein eL21 family.

The polypeptide is Large ribosomal subunit protein eL21 (Methanococcus maripaludis (strain C5 / ATCC BAA-1333)).